The primary structure comprises 208 residues: Outer-membrane lipoprotein carrier protein (208 aa).

The signal sequence occupies residues 1–21 (MPAFRYLIVLPLLCWGFASQA).

This sequence belongs to the LolA family. As to quaternary structure, monomer.

The protein resides in the periplasm. In terms of biological role, participates in the translocation of lipoproteins from the inner membrane to the outer membrane. Only forms a complex with a lipoprotein if the residue after the N-terminal Cys is not an aspartate (The Asp acts as a targeting signal to indicate that the lipoprotein should stay in the inner membrane). The chain is Outer-membrane lipoprotein carrier protein from Methylococcus capsulatus (strain ATCC 33009 / NCIMB 11132 / Bath).